The primary structure comprises 279 residues: Putative ABC transporter ATP-binding protein GSU3001 (279 aa).

The ABC transporter domain occupies 1–237; it reads MRFSVDLKAY…PAEMESVKLR (237 aa). 36–43 is a binding site for ATP; it reads GSNGSGKT.

Belongs to the ABC transporter superfamily.

The protein localises to the cell inner membrane. In terms of biological role, probably part of an ABC transporter complex. Responsible for energy coupling to the transport system. In Geobacter sulfurreducens (strain ATCC 51573 / DSM 12127 / PCA), this protein is Putative ABC transporter ATP-binding protein GSU3001.